The primary structure comprises 700 residues: Glycine--tRNA ligase beta subunit (700 aa).

It belongs to the class-II aminoacyl-tRNA synthetase family. In terms of assembly, tetramer of two alpha and two beta subunits.

It localises to the cytoplasm. The enzyme catalyses tRNA(Gly) + glycine + ATP = glycyl-tRNA(Gly) + AMP + diphosphate. This chain is Glycine--tRNA ligase beta subunit, found in Janthinobacterium sp. (strain Marseille) (Minibacterium massiliensis).